Reading from the N-terminus, the 441-residue chain is MRPLIAIVGRPNVGKSTLFNRIVGRRKAMVDDMPGVTRDRNYANVDRFDVPFILIDTGGFEPETNDRLLQQMREQSQLAMAEADVILFVMDGRDGLTPADVEVVEMLRRVDKPIFYLINKIDGDKQETAIGDFYTLGVDTIFTVSAEHNRGVNDLMDEVIKALPKGSAADTDEEVTKIAVIGRPNVGKSTLVNRLLGIERVVANPTPGTTRDSIDTYFTCNRKRYLLIDTAGIRRKGKTTEKIEKYSVVDSLRSIERADVVLIVIDAEEGVTEQDTKIAGYAYEAGRGCIFVVNKWDTLTKDNASMGKFIEKIRMEFKYLPFAPIVFVSAKTGQRLGKIMTEVDAVMEQFARRITTSDLNRVFSTATEEHHAPLYQGRRVKFYFATQVGTKPPSIVIFTNRPDGVHFSYERYIVNRFREAFGFTGTPMRLLFKGRESRKRA.

2 EngA-type G domains span residues 3-167 and 176-351; these read PLIA…PKGS and TKIA…EQFA. GTP is bound by residues 9–16, 56–60, 119–122, 182–189, 229–233, and 294–297; these read GRPNVGKS, DTGGF, NKID, DTAGI, and NKWD. The KH-like domain maps to 352 to 436; the sequence is RRITTSDLNR…PMRLLFKGRE (85 aa).

Belongs to the TRAFAC class TrmE-Era-EngA-EngB-Septin-like GTPase superfamily. EngA (Der) GTPase family. In terms of assembly, associates with the 50S ribosomal subunit.

In terms of biological role, GTPase that plays an essential role in the late steps of ribosome biogenesis. The protein is GTPase Der of Geotalea uraniireducens (strain Rf4) (Geobacter uraniireducens).